Consider the following 526-residue polypeptide: GMP synthase [glutamine-hydrolyzing] (526 aa).

The 201-residue stretch at 4-204 (KIVVLDFGSQ…AHAICGCSGD (201 aa)) folds into the Glutamine amidotransferase type-1 domain. Residue Cys-87 is the Nucleophile of the active site. Residues His-178 and Glu-180 contribute to the active site. A GMPS ATP-PPase domain is found at 205-401 (WTPASFVEEQ…LDVPDPIVGR (197 aa)). Residue 232 to 238 (SGGVDSS) participates in ATP binding.

As to quaternary structure, homodimer.

The enzyme catalyses XMP + L-glutamine + ATP + H2O = GMP + L-glutamate + AMP + diphosphate + 2 H(+). It functions in the pathway purine metabolism; GMP biosynthesis; GMP from XMP (L-Gln route): step 1/1. In terms of biological role, catalyzes the synthesis of GMP from XMP. The protein is GMP synthase [glutamine-hydrolyzing] of Salinibacter ruber (strain DSM 13855 / M31).